The following is a 216-amino-acid chain: Pyrophosphatase PpaX (216 aa).

Aspartate 9 acts as the Nucleophile in catalysis.

It belongs to the HAD-like hydrolase superfamily. PpaX family. It depends on Mg(2+) as a cofactor.

It catalyses the reaction diphosphate + H2O = 2 phosphate + H(+). Functionally, hydrolyzes pyrophosphate formed during P-Ser-HPr dephosphorylation by HPrK/P. Might play a role in controlling the intracellular pyrophosphate pool. In Bacillus cereus (strain AH820), this protein is Pyrophosphatase PpaX.